The chain runs to 631 residues: Occlusion-derived virus envelope protein E66 (631 aa).

Belongs to the baculoviridae E66 family.

The protein resides in the virion membrane. In terms of biological role, component of the polyhedra envelope. In Leucania separata nucleopolyhedrovirus (LsNPV), this protein is Occlusion-derived virus envelope protein E66.